Here is a 398-residue protein sequence, read N- to C-terminus: 1-deoxy-D-xylulose 5-phosphate reductoisomerase (398 aa).

NADPH is bound by residues threonine 28, glycine 29, serine 30, isoleucine 31, glycine 54, asparagine 57, and asparagine 135. Lysine 136 contacts 1-deoxy-D-xylulose 5-phosphate. NADPH is bound at residue glutamate 137. Position 159 (aspartate 159) interacts with Mn(2+). 4 residues coordinate 1-deoxy-D-xylulose 5-phosphate: serine 160, glutamate 161, serine 185, and histidine 208. A Mn(2+)-binding site is contributed by glutamate 161. Glycine 214 lines the NADPH pocket. The 1-deoxy-D-xylulose 5-phosphate site is built by serine 221, asparagine 226, lysine 227, and glutamate 230. Position 230 (glutamate 230) interacts with Mn(2+).

The protein belongs to the DXR family. Requires Mg(2+) as cofactor. Mn(2+) is required as a cofactor.

The enzyme catalyses 2-C-methyl-D-erythritol 4-phosphate + NADP(+) = 1-deoxy-D-xylulose 5-phosphate + NADPH + H(+). It participates in isoprenoid biosynthesis; isopentenyl diphosphate biosynthesis via DXP pathway; isopentenyl diphosphate from 1-deoxy-D-xylulose 5-phosphate: step 1/6. Catalyzes the NADPH-dependent rearrangement and reduction of 1-deoxy-D-xylulose-5-phosphate (DXP) to 2-C-methyl-D-erythritol 4-phosphate (MEP). The chain is 1-deoxy-D-xylulose 5-phosphate reductoisomerase from Rhodococcus jostii (strain RHA1).